Reading from the N-terminus, the 210-residue chain is MRLTPDVLMQAYATGIFPMAEHRDDPDIFWVDPLRRGIMPLRGFHMSRSLRRQMLRTAFDIRIDQDFAGVVDGCADRADTWINDEIRRLYNILHAQDRAHSLEVWEGDTLVGGVYGVTLGAAFFGESMFSRRSNASKIALACLVDRLLDGGFALFDTQFLTEHLASLGAIEISRAQYQKRLQEACARPASFLNPPLRSPQEVVQRITQMS.

Belongs to the L/F-transferase family.

It localises to the cytoplasm. It catalyses the reaction N-terminal L-lysyl-[protein] + L-leucyl-tRNA(Leu) = N-terminal L-leucyl-L-lysyl-[protein] + tRNA(Leu) + H(+). The enzyme catalyses N-terminal L-arginyl-[protein] + L-leucyl-tRNA(Leu) = N-terminal L-leucyl-L-arginyl-[protein] + tRNA(Leu) + H(+). It carries out the reaction L-phenylalanyl-tRNA(Phe) + an N-terminal L-alpha-aminoacyl-[protein] = an N-terminal L-phenylalanyl-L-alpha-aminoacyl-[protein] + tRNA(Phe). Functionally, functions in the N-end rule pathway of protein degradation where it conjugates Leu, Phe and, less efficiently, Met from aminoacyl-tRNAs to the N-termini of proteins containing an N-terminal arginine or lysine. This chain is Leucyl/phenylalanyl-tRNA--protein transferase, found in Roseobacter denitrificans (strain ATCC 33942 / OCh 114) (Erythrobacter sp. (strain OCh 114)).